Here is a 38-residue protein sequence, read N- to C-terminus: Alpha-amylase (38 aa).

It belongs to the glycosyl hydrolase 13 family. In terms of assembly, monomer. It depends on Ca(2+) as a cofactor. Chloride serves as cofactor. In terms of tissue distribution, expressed by the venom gland.

It is found in the secreted. The catalysed reaction is Endohydrolysis of (1-&gt;4)-alpha-D-glucosidic linkages in polysaccharides containing three or more (1-&gt;4)-alpha-linked D-glucose units.. The protein is Alpha-amylase of Tityus serrulatus (Brazilian scorpion).